A 265-amino-acid polypeptide reads, in one-letter code: Anaphase-promoting complex subunit 9 (265 aa).

As to quaternary structure, the APC/C is composed of at least 13 subunits that stay tightly associated throughout the cell cycle: APC1, APC2, APC4, APC5, APC9, APC11, CDC16, CDC23, CDC26, CDC27, DOC1, MND2 and SWM1.

It localises to the cytoplasm. The protein localises to the nucleus. The protein operates within protein modification; protein ubiquitination. In terms of biological role, component of the anaphase promoting complex/cyclosome (APC/C), a cell cycle-regulated E3 ubiquitin-protein ligase complex that controls progression through mitosis and the G1 phase of the cell cycle. The APC/C is thought to confer substrate specificity and, in the presence of ubiquitin-conjugating E2 enzymes, it catalyzes the formation of protein-ubiquitin conjugates that are subsequently degraded by the 26S proteasome. In early mitosis, the APC/C is activated by CDC20 and targets securin PDS1, the B-type cyclin CLB5, and other anaphase inhibitory proteins for proteolysis, thereby triggering the separation of sister chromatids at the metaphase-to-anaphase transition. In late mitosis and in G1, degradation of CLB5 allows activation of the APC/C by CDH1, which is needed to destroy CDC20 and the B-type cyclin CLB2 to allow exit from mitosis and creating the low CDK state necessary for cytokinesis and for reforming prereplicative complexes in G1 prior to another round of replication. The sequence is that of Anaphase-promoting complex subunit 9 (APC9) from Saccharomyces cerevisiae (strain ATCC 204508 / S288c) (Baker's yeast).